Here is a 322-residue protein sequence, read N- to C-terminus: Gluconeogenesis factor (322 aa).

The protein belongs to the gluconeogenesis factor family.

Its subcellular location is the cytoplasm. Functionally, required for morphogenesis under gluconeogenic growth conditions. The sequence is that of Gluconeogenesis factor from Listeria innocua serovar 6a (strain ATCC BAA-680 / CLIP 11262).